The primary structure comprises 522 residues: GMP synthase [glutamine-hydrolyzing] (522 aa).

The region spanning 9 to 204 (KILILDFGAQ…VVDICGCQTL (196 aa)) is the Glutamine amidotransferase type-1 domain. Residue cysteine 86 is the Nucleophile of the active site. Residues histidine 178 and glutamate 180 contribute to the active site. The GMPS ATP-PPase domain occupies 205–397 (WTAANIIEDQ…LGLPHAMVYR (193 aa)). Position 232 to 238 (232 to 238 (SGGVDSS)) interacts with ATP.

As to quaternary structure, homodimer.

It carries out the reaction XMP + L-glutamine + ATP + H2O = GMP + L-glutamate + AMP + diphosphate + 2 H(+). It participates in purine metabolism; GMP biosynthesis; GMP from XMP (L-Gln route): step 1/1. Its function is as follows. Catalyzes the synthesis of GMP from XMP. The chain is GMP synthase [glutamine-hydrolyzing] from Xylella fastidiosa (strain M12).